Reading from the N-terminus, the 219-residue chain is UPF0502 protein HCH_06091 (219 aa).

It belongs to the UPF0502 family.

The sequence is that of UPF0502 protein HCH_06091 from Hahella chejuensis (strain KCTC 2396).